The sequence spans 397 residues: Ribosomal RNA large subunit methyltransferase I (397 aa).

The PUA domain occupies 2–80; sequence SAAIYLVKGR…QDVNRAFFVK (79 aa).

The protein belongs to the methyltransferase superfamily. RlmI family.

It localises to the cytoplasm. The catalysed reaction is cytidine(1962) in 23S rRNA + S-adenosyl-L-methionine = 5-methylcytidine(1962) in 23S rRNA + S-adenosyl-L-homocysteine + H(+). Its function is as follows. Specifically methylates the cytosine at position 1962 (m5C1962) of 23S rRNA. In Vibrio vulnificus (strain YJ016), this protein is Ribosomal RNA large subunit methyltransferase I.